A 256-amino-acid polypeptide reads, in one-letter code: HTH-type transcriptional regulator PrtR (256 aa).

The region spanning 16 to 69 (LKQAMAMRNLKQETLAEAAGVSQNTIHKLTSGKAQSTRKLIEIAAALGVSPVWL) is the HTH cro/C1-type domain. The segment at residues 27–46 (QETLAEAAGVSQNTIHKLTS) is a DNA-binding region (H-T-H motif).

Its function is as follows. Represses the promoter activity of the prtN gene. The chain is HTH-type transcriptional regulator PrtR (prtR) from Pseudomonas aeruginosa (strain ATCC 15692 / DSM 22644 / CIP 104116 / JCM 14847 / LMG 12228 / 1C / PRS 101 / PAO1).